Here is a 336-residue protein sequence, read N- to C-terminus: Dihydroorotate dehydrogenase (quinone) (336 aa).

Residues Ala-62 to Lys-66 and Thr-86 contribute to the FMN site. Residue Lys-66 participates in substrate binding. A substrate-binding site is contributed by Asn-111–Phe-115. FMN is bound by residues Asn-139 and Asn-172. Asn-172 contacts substrate. Ser-175 functions as the Nucleophile in the catalytic mechanism. Asn-177 provides a ligand contact to substrate. 2 residues coordinate FMN: Lys-217 and Thr-245. Residue Asn-246–Thr-247 coordinates substrate. FMN contacts are provided by residues Gly-268, Gly-297, and Tyr-318–Ser-319.

This sequence belongs to the dihydroorotate dehydrogenase family. Type 2 subfamily. Monomer. FMN is required as a cofactor.

The protein localises to the cell membrane. The catalysed reaction is (S)-dihydroorotate + a quinone = orotate + a quinol. The protein operates within pyrimidine metabolism; UMP biosynthesis via de novo pathway; orotate from (S)-dihydroorotate (quinone route): step 1/1. In terms of biological role, catalyzes the conversion of dihydroorotate to orotate with quinone as electron acceptor. The protein is Dihydroorotate dehydrogenase (quinone) of Baumannia cicadellinicola subsp. Homalodisca coagulata.